Reading from the N-terminus, the 212-residue chain is Nitrogen regulatory protein P-II homolog (212 aa).

Low complexity-rich tracts occupy residues 1-12 (MSSPATAAAAAA), 32-46 (TTTTTSRLLLASRSR), and 63-74 (PPTAARAQSAAA). The transit peptide at 1–68 (MSSPATAAAA…PRRLPPTAAR (68 aa)) directs the protein to the chloroplast. The segment at 1–74 (MSSPATAAAA…TAARAQSAAA (74 aa)) is disordered. Residues 117–121 (GFGAQ) and 170–173 (GDGK) contribute to the ATP site. A Mg(2+)-binding site is contributed by Gly119.

Belongs to the P(II) protein family. Homodimer.

Its subcellular location is the plastid. It localises to the chloroplast. Its function is as follows. Participates in sensing carbon and organic nitrogen status and regulates some steps of primary carbon and nitrogen metabolism. The protein is Nitrogen regulatory protein P-II homolog (GLB) of Oryza sativa subsp. japonica (Rice).